Consider the following 212-residue polypeptide: Large ribosomal subunit protein uL3 (212 aa).

Glutamine 153 bears the N5-methylglutamine mark.

Belongs to the universal ribosomal protein uL3 family. In terms of assembly, part of the 50S ribosomal subunit. Forms a cluster with proteins L14 and L19. Methylated by PrmB.

Its function is as follows. One of the primary rRNA binding proteins, it binds directly near the 3'-end of the 23S rRNA, where it nucleates assembly of the 50S subunit. The chain is Large ribosomal subunit protein uL3 from Shewanella halifaxensis (strain HAW-EB4).